We begin with the raw amino-acid sequence, 74 residues long: UPF0291 protein lmo0496 (74 aa).

It belongs to the UPF0291 family.

The protein resides in the cytoplasm. In Listeria monocytogenes serovar 1/2a (strain ATCC BAA-679 / EGD-e), this protein is UPF0291 protein lmo0496.